Here is a 418-residue protein sequence, read N- to C-terminus: RuvB-like helicase 2 (418 aa).

65–72 (GDRGSGKT) provides a ligand contact to ATP.

Belongs to the RuvB family. In terms of assembly, component of the SWR1 chromatin remodeling complex, the INO80 chromatin remodeling complex, and of the R2TP complex.

It localises to the nucleus. The catalysed reaction is ATP + H2O = ADP + phosphate + H(+). Its function is as follows. DNA helicase which participates in several chromatin remodeling complexes, including the SWR1 and the INO80 complexes. The SWR1 complex mediates the ATP-dependent exchange of histone H2A for the H2A variant HZT1 leading to transcriptional regulation of selected genes by chromatin remodeling. The INO80 complex remodels chromatin by shifting nucleosomes and is involved in DNA repair. Also involved in pre-rRNA processing. In Encephalitozoon cuniculi (strain GB-M1) (Microsporidian parasite), this protein is RuvB-like helicase 2 (RVB2).